The sequence spans 503 residues: MEAAAAAPRRPQLLIVLVAAATLLPGAKALQCFCHLCTKDNFTCETDGLCFVSVTETTDKVIHNSMCIAEIDLIPRDRPFVCAPSSKTGAVTTTYCCNQDHCNKIELPTTGPFSEKQSAGLGPVELAAVIAGPVCFVCIALMLMVYICHNRTVIHHRVPNEEDPSLDRPFISEGTTLKDLIYDMTTSGSGSGLPLLVQRTIARTIVLQESIGKGRFGEVWRGKWRGEEVAVKIFSSREERSWFREAEIYQTVMLRHENILGFIAADNKDNGTWTQLWLVSDYHEHGSLFDYLNRYTVTVEGMIKLALSTASGLAHLHMEIVGTQGKPAIAHRDLKSKNILVKKNGTCCIADLGLAVRHDSATDTIDIAPNHRVGTKRYMAPEVLDDSINMKHFESFKRADIYAMGLVFWEIARRCSIGGIHEDYQLPYYDLVPSDPSVEEMRKVVCEQKLRPNIPNRWQSCEALRVMAKIMRECWYANGAARLTALRIKKTLSQLSQQEGIKM.

Residues 1 to 29 form the signal peptide; that stretch reads MEAAAAAPRRPQLLIVLVAAATLLPGAKA. The Extracellular portion of the chain corresponds to 30–126; sequence LQCFCHLCTK…QSAGLGPVEL (97 aa). 5 disulfide bridges follow: C32–C50, C34–C37, C44–C67, C82–C96, and C97–C102. The N-linked (GlcNAc...) asparagine glycan is linked to N41. A helical membrane pass occupies residues 127-147; the sequence is AAVIAGPVCFVCIALMLMVYI. At 148 to 503 the chain is on the cytoplasmic side; the sequence is CHNRTVIHHR…QLSQQEGIKM (356 aa). S165 is subject to Phosphoserine. The GS domain occupies 175 to 204; sequence TTLKDLIYDMTTSGSGSGLPLLVQRTIART. Phosphothreonine; by TGFBR2 is present on residues T185 and T186. Phosphoserine; by TGFBR2 occurs at positions 187, 189, and 191. The short motif at 193–194 is the FKBP1A-binding element; the sequence is LP. A Protein kinase domain is found at 205 to 495; the sequence is IVLQESIGKG…LRIKKTLSQL (291 aa). Residues 211-219 and K232 each bind ATP; that span reads IGKGRFGEV. A Glycyl lysine isopeptide (Lys-Gly) (interchain with G-Cter in ubiquitin) cross-link involves residue K268. D333 functions as the Proton acceptor in the catalytic mechanism. K391 is covalently cross-linked (Glycyl lysine isopeptide (Lys-Gly) (interchain with G-Cter in SUMO)).

The protein belongs to the protein kinase superfamily. TKL Ser/Thr protein kinase family. TGFB receptor subfamily. As to quaternary structure, homodimer; in the endoplasmic reticulum but also at the cell membrane. Heterohexamer; TGFB1, TGFB2 and TGFB3 homodimeric ligands assemble a functional receptor composed of two TGFBR1 and TGFBR2 heterodimers to form a ligand-receptor heterohexamer. The respective affinity of TGBRB1 and TGFBR2 for the ligands may modulate the kinetics of assembly of the receptor and may explain the different biological activities of TGFB1, TGFB2 and TGFB3. Component of a complex composed of TSC22D1 (via N-terminus), TGFBR1 and TGFBR2; the interaction between TSC22D1 and TGFBR1 is inhibited by SMAD7 and promoted by TGFB1. Interacts with CD109; inhibits TGF-beta receptor activation in keratinocytes. Interacts with RBPMS. Interacts (unphosphorylated) with FKBP1A; prevents TGFBR1 phosphorylation by TGFBR2 and stabilizes it in the inactive conformation. Interacts with SMAD2, SMAD3 and ZFYVE9; ZFYVE9 recruits SMAD2 and SMAD3 to the TGF-beta receptor. Interacts with TRAF6 and MAP3K7; induces MAP3K7 activation by TRAF6. Interacts with PARD6A; involved in TGF-beta induced epithelial to mesenchymal transition. Interacts with NEDD4L. Interacts with SMAD7, SMURF1 and SMURF2; SMAD7 recruits NEDD4L, SMURF1 and SMURF2 to the TGF-beta receptor. Interacts with USP15 and VPS39. Interacts with SDCBP (via C-terminus). Interacts with CAV1 and this interaction is impaired in the presence of SDCBP. Interacts with APPL1; interaction is TGF beta dependent; mediates trafficking of the TGFBR1 from the endosomes to the nucleus via microtubules in a TRAF6-dependent manner. Interacts with GPR50; this interaction promotes the constitutive activation of SMAD signaling pathway. Mg(2+) is required as a cofactor. The cofactor is Mn(2+). Phosphorylated at basal levels in the absence of ligand. Activated upon phosphorylation by TGFBR2, mainly in the GS domain. Phosphorylation in the GS domain abrogates FKBP1A-binding. Post-translationally, N-Glycosylated. In terms of processing, ubiquitinated; undergoes ubiquitination catalyzed by several E3 ubiquitin ligases including SMURF1, SMURF2 and NEDD4L2. Results in the proteasomal and/or lysosomal degradation of the receptor thereby negatively regulating its activity. Deubiquitinated by USP15, leading to stabilization of the protein and enhanced TGF-beta signal. Its ubiquitination and proteasome-mediated degradation is negatively regulated by SDCBP. Ubiquitinated by BFAR via'Lys-63'-linked ubiquitination at Lys-268, leading to TGF-beta signaling activation.

The protein localises to the cell membrane. It localises to the cell junction. It is found in the tight junction. The protein resides in the membrane raft. Its subcellular location is the cell surface. The catalysed reaction is L-threonyl-[receptor-protein] + ATP = O-phospho-L-threonyl-[receptor-protein] + ADP + H(+). It carries out the reaction L-seryl-[receptor-protein] + ATP = O-phospho-L-seryl-[receptor-protein] + ADP + H(+). Its activity is regulated as follows. Kept in an inactive conformation by FKBP1A preventing receptor activation in absence of ligand. CD109 is another inhibitor of the receptor. Functionally, transmembrane serine/threonine kinase forming with the TGF-beta type II serine/threonine kinase receptor, TGFBR2, the non-promiscuous receptor for the TGF-beta cytokines TGFB1, TGFB2 and TGFB3. Transduces the TGFB1, TGFB2 and TGFB3 signal from the cell surface to the cytoplasm and is thus regulating a plethora of physiological and pathological processes including cell cycle arrest in epithelial and hematopoietic cells, control of mesenchymal cell proliferation and differentiation, wound healing, extracellular matrix production, immunosuppression and carcinogenesis. The formation of the receptor complex composed of 2 TGFBR1 and 2 TGFBR2 molecules symmetrically bound to the cytokine dimer results in the phosphorylation and the activation of TGFBR1 by the constitutively active TGFBR2. Activated TGFBR1 phosphorylates SMAD2 which dissociates from the receptor and interacts with SMAD4. The SMAD2-SMAD4 complex is subsequently translocated to the nucleus where it modulates the transcription of the TGF-beta-regulated genes. This constitutes the canonical SMAD-dependent TGF-beta signaling cascade. Also involved in non-canonical, SMAD-independent TGF-beta signaling pathways. For instance, TGFBR1 induces TRAF6 autoubiquitination which in turn results in MAP3K7 ubiquitination and activation to trigger apoptosis. Also regulates epithelial to mesenchymal transition through a SMAD-independent signaling pathway through PARD6A phosphorylation and activation. This Mus musculus (Mouse) protein is TGF-beta receptor type-1 (Tgfbr1).